The following is a 373-amino-acid chain: MEYDEEEVKVLKEVLSAFFLYRQYAHTITQQKRKSMSRLSFEHKDLLLQDSDNNFLKHLSRIDQCIEQNSVLAEAIANAAIPVFCSDFDQNELFHVNVDMMQKVSSTLKQIARDWSTECVEERRTTYAPFIEELNSLFPSDSIDRSKIRVLVPGSGLGRLAFDIAVEGFACQGNEFSYFMLLTSHFILNCVKQENQFLVYPYIHSFSNHVMRDDQVRSLNIPDAVPSQYLRNSQNFSMAAGDFLEVYGTEESRDSFQVVATCFFIDTTKNILDYLDTIKNCLVDGGYWINLGPLLYHFESEGTSNSNSDSQQQPFVELTLEQLFYVMDSMGFEVLKHNSVDTTYMGDKRSMLEWIYHPHYWVCRLQKSKLRFQ.

Residues Gln110, Arg113, Gly154, Glu175, Asp242, Phe243, and Cys262 each coordinate S-adenosyl-L-methionine. Asp266 is a carnosine binding site. Tyr274 provides a ligand contact to S-adenosyl-L-methionine. Positions 297 and 356 each coordinate carnosine.

The protein belongs to the carnosine N-methyltransferase family.

The protein localises to the cytoplasm. The protein resides in the nucleus. It carries out the reaction carnosine + S-adenosyl-L-methionine = anserine + S-adenosyl-L-homocysteine + H(+). Functionally, N-methyltransferase that mediates the formation of anserine (beta-alanyl-N(Pi)-methyl-L-histidine) from carnosine. Also methylates other L-histidine-containing di- and tripeptides such as Gly-Gly-His, Gly-His and homocarnosine (GABA-His). The chain is Carnosine N-methyltransferase from Schizosaccharomyces pombe (strain 972 / ATCC 24843) (Fission yeast).